We begin with the raw amino-acid sequence, 603 residues long: Linalool synthase Tps-5031L19, chloroplastic (603 aa).

The transit peptide at 1–36 (MSSMRTYVAIMKKPSVEHVDNVDKKASKPSWRVSLS) directs the protein to the chloroplast. 5 residues coordinate (2E)-geranyl diphosphate: Arg322, Asp359, Asp363, Arg500, and Asp503. Mg(2+)-binding residues include Asp359 and Asp363. The DDXXD motif motif lies at 359 to 363 (DDVYD). The Mg(2+) site is built by Asp503, Thr507, and Glu511.

It belongs to the terpene synthase family. Tpsb subfamily. Monomer. Mg(2+) is required as a cofactor. It depends on Mn(2+) as a cofactor.

The protein localises to the plastid. It localises to the chloroplast. It carries out the reaction (2E)-geranyl diphosphate + H2O = linalool + diphosphate. It functions in the pathway secondary metabolite biosynthesis; terpenoid biosynthesis. Monoterpene synthase (mono-TPS) involved in the biosynthesis of monoterpenes natural products. Catalyzes the conversion of (2E)-geranyl diphosphate (GPP) into linalool. This chain is Linalool synthase Tps-5031L19, chloroplastic, found in Perilla frutescens var. hirtella (Perilla citriodora).